The following is a 147-amino-acid chain: Large ribosomal subunit protein bL9 (147 aa).

It belongs to the bacterial ribosomal protein bL9 family.

Its function is as follows. Binds to the 23S rRNA. In Campylobacter jejuni subsp. doylei (strain ATCC BAA-1458 / RM4099 / 269.97), this protein is Large ribosomal subunit protein bL9.